The sequence spans 92 residues: Small ribosomal subunit protein uS19c (92 aa).

Belongs to the universal ribosomal protein uS19 family. Component of the chloroplast small ribosomal subunit (SSU). Mature 70S chloroplast ribosomes of higher plants consist of a small (30S) and a large (50S) subunit. The 30S small subunit contains 1 molecule of ribosomal RNA (16S rRNA) and 24 different proteins. The 50S large subunit contains 3 rRNA molecules (23S, 5S and 4.5S rRNA) and 33 different proteins. uS19c binds directly to 16S ribosomal RNA.

The protein localises to the plastid. It localises to the chloroplast. Component of the chloroplast ribosome (chloro-ribosome), a dedicated translation machinery responsible for the synthesis of chloroplast genome-encoded proteins, including proteins of the transcription and translation machinery and components of the photosynthetic apparatus. The sequence is that of Small ribosomal subunit protein uS19c (rps19) from Spinacia oleracea (Spinach).